The sequence spans 317 residues: Glycine--tRNA ligase alpha subunit (317 aa).

This sequence belongs to the class-II aminoacyl-tRNA synthetase family. In terms of assembly, tetramer of two alpha and two beta subunits.

The protein resides in the cytoplasm. The catalysed reaction is tRNA(Gly) + glycine + ATP = glycyl-tRNA(Gly) + AMP + diphosphate. This chain is Glycine--tRNA ligase alpha subunit, found in Cupriavidus metallidurans (strain ATCC 43123 / DSM 2839 / NBRC 102507 / CH34) (Ralstonia metallidurans).